The following is a 517-amino-acid chain: MYLNSRITRIFRLKKERFWQQNFLYPLLLQEYLYSLAHYHSFNSLIFYEPVEIIGYDNKSSLVLVKRLITQMYQQKSFISSVNDSNQNGFSLHKNSFSYHFYSQMVSEGFGVILEISFSSRLVSSLEEKRIPKSQNLRSIHSIFPFLEDKLSHLNYVSDLLIPYPIHLGILVQILQCWIKDVSSSHLLRLIFHEYHNLNRDIPSKKSIYVLSKERRRFFWFLHNFYVYGCEYIFLYRRKQSSYLRSISSGVFLERTHFYGKIGYLRVVSCYSFQRILWFLKDIFIHYVRYQGKAILASKGTFFLMNKWKFHFVNFWQSYFHFWFQPYRIHIKQLPNYSFSFLGYFSSVLKNPLVVRNQMLENSFLINTLTNKLDTIAPVIFLIGSLSKAQFCTVLGHPISKPIWTNLSDSDILDRFCRICRNLSRYHSGSSKKHILYRIKYILRFTCARTLARKHKSTVRMFMLRLGSVFLEESFLEDEQSLSLIFLHNIPFLLHRLHRERIGYLDIIRMNDLMDHS.

Belongs to the intron maturase 2 family. MatK subfamily.

It localises to the plastid. It is found in the chloroplast. Usually encoded in the trnK tRNA gene intron. Probably assists in splicing its own and other chloroplast group II introns. This chain is Maturase K, found in Phalaenopsis japonica (Orchid).